The primary structure comprises 156 residues: Keratin, high-sulfur matrix protein, B2B (156 aa).

A1 is modified (N-acetylalanine). Repeats lie at residues 26–35 (PTCSQTSCCQ), 36–45 (PTSIQTSCCQ), 46–55 (PISIQTSCCQ), and 56–65 (PTCLQTSGCE).

Its function is as follows. The keratin products of mammalian epidermal derivatives such as wool and hair consist of microfibrils embedded in a rigid matrix of other proteins. The matrix proteins include the high-sulfur and high-tyrosine keratins, having molecular weights of 6-20 kDa, whereas the microfibrils contain the larger, low-sulfur keratins (40-56 kDa). The polypeptide is Keratin, high-sulfur matrix protein, B2B (Ovis aries (Sheep)).